Consider the following 194-residue polypeptide: Protein GrpE (194 aa).

The segment covering 1-24 has biased composition (basic and acidic residues); sequence MEEKDKEEKVTGENLEPEDKNLEQ. The disordered stretch occupies residues 1–41; it reads MEEKDKEEKVTGENLEPEDKNLEQEDKEEVVGPQEEQQIDE.

Belongs to the GrpE family. Homodimer.

It is found in the cytoplasm. Functionally, participates actively in the response to hyperosmotic and heat shock by preventing the aggregation of stress-denatured proteins, in association with DnaK and GrpE. It is the nucleotide exchange factor for DnaK and may function as a thermosensor. Unfolded proteins bind initially to DnaJ; upon interaction with the DnaJ-bound protein, DnaK hydrolyzes its bound ATP, resulting in the formation of a stable complex. GrpE releases ADP from DnaK; ATP binding to DnaK triggers the release of the substrate protein, thus completing the reaction cycle. Several rounds of ATP-dependent interactions between DnaJ, DnaK and GrpE are required for fully efficient folding. The polypeptide is Protein GrpE (Carboxydothermus hydrogenoformans (strain ATCC BAA-161 / DSM 6008 / Z-2901)).